Consider the following 371-residue polypeptide: 4-hydroxy-3-methylbut-2-en-1-yl diphosphate synthase (flavodoxin) (371 aa).

Positions 268, 271, 303, and 310 each coordinate [4Fe-4S] cluster.

Belongs to the IspG family. [4Fe-4S] cluster is required as a cofactor.

The enzyme catalyses (2E)-4-hydroxy-3-methylbut-2-enyl diphosphate + oxidized [flavodoxin] + H2O + 2 H(+) = 2-C-methyl-D-erythritol 2,4-cyclic diphosphate + reduced [flavodoxin]. Its pathway is isoprenoid biosynthesis; isopentenyl diphosphate biosynthesis via DXP pathway; isopentenyl diphosphate from 1-deoxy-D-xylulose 5-phosphate: step 5/6. In terms of biological role, converts 2C-methyl-D-erythritol 2,4-cyclodiphosphate (ME-2,4cPP) into 1-hydroxy-2-methyl-2-(E)-butenyl 4-diphosphate. This chain is 4-hydroxy-3-methylbut-2-en-1-yl diphosphate synthase (flavodoxin), found in Lysinibacillus sphaericus (strain C3-41).